The sequence spans 84 residues: Large ribosomal subunit protein bL27 (84 aa).

The segment at 1–24 (MAHKKGAASTKNGRDSNSQRLGVK) is disordered. A compositionally biased stretch (polar residues) spans 9-20 (STKNGRDSNSQR).

The protein belongs to the bacterial ribosomal protein bL27 family.

This chain is Large ribosomal subunit protein bL27, found in Nocardioides sp. (strain ATCC BAA-499 / JS614).